Here is a 243-residue protein sequence, read N- to C-terminus: 3-deoxy-manno-octulosonate cytidylyltransferase (243 aa).

The protein belongs to the KdsB family.

The protein localises to the cytoplasm. It carries out the reaction 3-deoxy-alpha-D-manno-oct-2-ulosonate + CTP = CMP-3-deoxy-beta-D-manno-octulosonate + diphosphate. It functions in the pathway nucleotide-sugar biosynthesis; CMP-3-deoxy-D-manno-octulosonate biosynthesis; CMP-3-deoxy-D-manno-octulosonate from 3-deoxy-D-manno-octulosonate and CTP: step 1/1. The protein operates within bacterial outer membrane biogenesis; lipopolysaccharide biosynthesis. In terms of biological role, activates KDO (a required 8-carbon sugar) for incorporation into bacterial lipopolysaccharide in Gram-negative bacteria. This is 3-deoxy-manno-octulosonate cytidylyltransferase from Bartonella tribocorum (strain CIP 105476 / IBS 506).